The chain runs to 844 residues: Serrate RNA effector molecule homolog B (844 aa).

4 disordered regions span residues 1–90 (MADS…HGSD), 277–401 (EAAK…PRPL), 555–575 (ELLS…GNPT), and 794–825 (PNPY…MRGD). Composition is skewed to basic and acidic residues over residues 16 to 73 (FRRE…RHDI) and 277 to 337 (EAAK…ETRK). The segment covering 349-359 (SDDGSDSESDT) has biased composition (acidic residues). Residues 376–397 (DTPKKEEETEKPKEKPKEDTVK) are compositionally biased toward basic and acidic residues.

The protein belongs to the ARS2 family. Interacts ncbp1/cbp80.

The protein resides in the nucleus. It is found in the nucleoplasm. The protein localises to the cytoplasm. Acts as a mediator between the cap-binding complex (CBC) and the primary microRNAs (miRNAs) processing machinery during cell proliferation. Contributes to the stability and delivery of capped primary miRNA transcripts to the primary miRNA processing complex, thereby playing a role in RNA-mediated gene silencing (RNAi) by miRNAs. This is Serrate RNA effector molecule homolog B (srrt-b) from Xenopus laevis (African clawed frog).